The sequence spans 207 residues: Small ribosomal subunit protein uS4 (207 aa).

A disordered region spans residues 30–53; sequence DKSKFDTKPGQHGRTSGQRTSDFG. The segment covering 42 to 52 has biased composition (polar residues); it reads GRTSGQRTSDF. In terms of domain architecture, S4 RNA-binding spans 97–157; it reads SRLDNVVYRM…EKSKKQARIV (61 aa).

Belongs to the universal ribosomal protein uS4 family. As to quaternary structure, part of the 30S ribosomal subunit. Contacts protein S5. The interaction surface between S4 and S5 is involved in control of translational fidelity.

In terms of biological role, one of the primary rRNA binding proteins, it binds directly to 16S rRNA where it nucleates assembly of the body of the 30S subunit. Functionally, with S5 and S12 plays an important role in translational accuracy. The sequence is that of Small ribosomal subunit protein uS4 from Delftia acidovorans (strain DSM 14801 / SPH-1).